Here is a 475-residue protein sequence, read N- to C-terminus: Ribulose bisphosphate carboxylase large chain (475 aa).

Residues 1-2 (MV) constitute a propeptide that is removed on maturation. Pro3 bears the N-acetylproline mark. An N6,N6,N6-trimethyllysine modification is found at Lys14. The substrate site is built by Asn123 and Thr173. Lys175 acts as the Proton acceptor in catalysis. Lys177 contacts substrate. The Mg(2+) site is built by Lys201, Asp203, and Glu204. Residue Lys201 is modified to N6-carboxylysine. Residue His294 is the Proton acceptor of the active site. The substrate site is built by Arg295, His327, and Ser379.

Belongs to the RuBisCO large chain family. Type I subfamily. As to quaternary structure, heterohexadecamer of 8 large chains and 8 small chains. It depends on Mg(2+) as a cofactor.

The protein localises to the plastid. The protein resides in the chloroplast. It carries out the reaction 2 (2R)-3-phosphoglycerate + 2 H(+) = D-ribulose 1,5-bisphosphate + CO2 + H2O. It catalyses the reaction D-ribulose 1,5-bisphosphate + O2 = 2-phosphoglycolate + (2R)-3-phosphoglycerate + 2 H(+). Its function is as follows. RuBisCO catalyzes two reactions: the carboxylation of D-ribulose 1,5-bisphosphate, the primary event in carbon dioxide fixation, as well as the oxidative fragmentation of the pentose substrate in the photorespiration process. Both reactions occur simultaneously and in competition at the same active site. The protein is Ribulose bisphosphate carboxylase large chain of Dunaliella tertiolecta (Green alga).